A 204-amino-acid polypeptide reads, in one-letter code: Holliday junction branch migration complex subunit RuvA (204 aa).

A domain I region spans residues methionine 1–glycine 65. The tract at residues threonine 66–threonine 142 is domain II. The interval alanine 143–alanine 152 is flexible linker. A domain III region spans residues alanine 152–arginine 204.

Belongs to the RuvA family. Homotetramer. Forms an RuvA(8)-RuvB(12)-Holliday junction (HJ) complex. HJ DNA is sandwiched between 2 RuvA tetramers; dsDNA enters through RuvA and exits via RuvB. An RuvB hexamer assembles on each DNA strand where it exits the tetramer. Each RuvB hexamer is contacted by two RuvA subunits (via domain III) on 2 adjacent RuvB subunits; this complex drives branch migration. In the full resolvosome a probable DNA-RuvA(4)-RuvB(12)-RuvC(2) complex forms which resolves the HJ.

It localises to the cytoplasm. In terms of biological role, the RuvA-RuvB-RuvC complex processes Holliday junction (HJ) DNA during genetic recombination and DNA repair, while the RuvA-RuvB complex plays an important role in the rescue of blocked DNA replication forks via replication fork reversal (RFR). RuvA specifically binds to HJ cruciform DNA, conferring on it an open structure. The RuvB hexamer acts as an ATP-dependent pump, pulling dsDNA into and through the RuvAB complex. HJ branch migration allows RuvC to scan DNA until it finds its consensus sequence, where it cleaves and resolves the cruciform DNA. The chain is Holliday junction branch migration complex subunit RuvA from Caulobacter sp. (strain K31).